Consider the following 885-residue polypeptide: Ankyrin repeat and SAM domain-containing protein 6 (885 aa).

10 ANK repeats span residues 8-37, 68-97, 101-130, 134-163, 181-210, 215-244, 282-312, 316-345, 350-379, and 383-414; these read PGLQ…EPVA, AGNS…SVNS, YGWS…DVNA, LGAS…TVDH, LGIT…DPNH, VGWS…NPDH, KRRP…HVNL, DGAT…DMNK, HGWT…DVTL, and NGYT…QVNK. A 3-hydroxyasparagine modification is found at asparagine 129. 4 disordered regions span residues 415–439, 491–522, 563–775, and 855–885; these read DRGG…SIPM, MRAP…PRRE, SSDR…ITDE, and FESS…SSRR. Positions 608-640 are enriched in low complexity; that stretch reads PSISRSPTSPASSGNFNHSPHSSGGASGVGSMS. Serine 650 is subject to Phosphoserine. The segment covering 650–662 has biased composition (polar residues); it reads SGGSVDSVLSQIA. 2 stretches are compositionally biased toward low complexity: residues 689–713 and 722–739; these read GSSP…TSSS and PPSG…TLTP. A phosphoserine mark is found at serine 734 and serine 742. A compositionally biased stretch (low complexity) spans 750–770; it reads SSVSSSSSHRQSKSSGGSSSG. One can recognise an SAM domain in the interval 773-836; sequence TDEDELTGIL…LAAISELNAG (64 aa). The segment covering 855–865 has biased composition (polar residues); the sequence is FESSASNTRAP. Residues 876–885 show a composition bias toward basic and acidic residues; that stretch reads RPEETVSSRR.

Homooligomer. Interacts with NEK8. Central component of a complex containing at least ANKS6, INVS, NEK8 and NPHP3. ANKS6 may organize complex assembly by linking INVS and NPHP3 to NEK8 and INVS may target the complex to the proximal ciliary axoneme. Interacts (via SAM domain) with BICC1 (via KH domains) in an RNA-dependent manner. Interacts (via SAM domain) with ANKS3 (via SAM domain). In terms of processing, hydroxylated at Asn-129, most probably by HIF1AN. This hydroxylation results in decreased NEK8-binding. Widely expressed with moderate level in brain, skeletal muscle and testis. Expressed in renal tubules.

It is found in the cell projection. It localises to the cilium. The protein localises to the cytoplasm. Functionally, required for renal function. This Rattus norvegicus (Rat) protein is Ankyrin repeat and SAM domain-containing protein 6 (Anks6).